We begin with the raw amino-acid sequence, 581 residues long: MALKRLKTKKSKRLTGRLKHKIEKKVRDHNKKERRAAKKNPKKGSKKQKLIQIPNICPFKDDILKEVEEAKQRQEAERLARREAFKAEREQNKFKTLESMVEDADMRSTVHGIMHENDAQDQDEKKYKNAVTKEQSLKQYFKEFRKVIENADVVLEVVDARDPLGTRCNEVERAVRGAPGNKRLVLVLNKADLVPRENLNNWIKYFRRSGPVTAFKASTQDQANRLGRRKLREMKTEKAMQGSVCIGAELLMSMLGNYCRNKGIKTSIRVGVVGIPNVGKSSIINSLTRGRSCMVGSTPGVTKSMQEVELDSKIKLIDCPGIVFTSGGENSHAVLKNAQRVGDVKDPFTIAESVLKRASKEYFCTMYDITNYDTFEEFFAKKAARMGKFLKKGVPDVVAAARSVLNDWNTGKIKYCTQPPEVQEGQSVHISASIVHSEAREFDVENFESMETEILEHCAVKTDDIMEITSTGPLEIRQPREEAEPADKITASLVIDEKEKPAKGRKRKLDEEKEKVDPSLLLEENQSLNKGIKQMQKLKKKQNVRNEKKISKITDVLDSFSLGPSSSKAEKYDFDEDYVIE.

The segment covering 1 to 49 (MALKRLKTKKSKRLTGRLKHKIEKKVRDHNKKERRAAKKNPKKGSKKQK) has biased composition (basic residues). The interval 1–50 (MALKRLKTKKSKRLTGRLKHKIEKKVRDHNKKERRAAKKNPKKGSKKQKL) is disordered. Residues 64–108 (LKEVEEAKQRQEAERLARREAFKAEREQNKFKTLESMVEDADMRS) adopt a coiled-coil conformation. S99 carries the phosphoserine modification. Residues 141 to 325 (FKEFRKVIEN…LIDCPGIVFT (185 aa)) enclose the CP-type G domain. Residues 189–192 (NKAD), 274–281 (GIPNVGKS), and 318–321 (DCPG) contribute to the GTP site. Over residues 500–517 (KPAKGRKRKLDEEKEKVD) the composition is skewed to basic and acidic residues. The disordered stretch occupies residues 500–519 (KPAKGRKRKLDEEKEKVDPS).

The protein belongs to the TRAFAC class YlqF/YawG GTPase family.

It localises to the nucleus. It is found in the nucleolus. Its function is as follows. May play a role in regulating cellular proliferation. The polypeptide is Guanine nucleotide-binding protein-like 3 homolog (Ns1) (Drosophila melanogaster (Fruit fly)).